The primary structure comprises 157 residues: Transcriptional repressor NrdR (157 aa).

A zinc finger lies at 3-34; that stretch reads CPKCNSTHSRVVDSRHADEANAIRRRRECENC. Residues 49–139 form the ATP-cone domain; the sequence is LIVVKKDGTR…VYKEFKDVDQ (91 aa).

The protein belongs to the NrdR family. Requires Zn(2+) as cofactor.

In terms of biological role, negatively regulates transcription of bacterial ribonucleotide reductase nrd genes and operons by binding to NrdR-boxes. The protein is Transcriptional repressor NrdR of Staphylococcus carnosus (strain TM300).